Consider the following 103-residue polypeptide: Large ribosomal subunit protein bL21 (103 aa).

Belongs to the bacterial ribosomal protein bL21 family. Part of the 50S ribosomal subunit. Contacts protein L20.

Functionally, this protein binds to 23S rRNA in the presence of protein L20. This chain is Large ribosomal subunit protein bL21, found in Thioalkalivibrio sulfidiphilus (strain HL-EbGR7).